Reading from the N-terminus, the 326-residue chain is Zona pellucida-binding protein 2 (326 aa).

The first 20 residues, 1 to 20 (MLAWALLSAVLWSLAGVGSA), serve as a signal peptide directing secretion. Asparagine 86, asparagine 220, and asparagine 256 each carry an N-linked (GlcNAc...) asparagine glycan.

The protein belongs to the zona pellucida-binding protein Sp38 family. In terms of processing, N-glycosylated.

Its subcellular location is the secreted. The protein localises to the cytoplasmic vesicle. It is found in the secretory vesicle. The protein resides in the acrosome. Its function is as follows. Is implicated in sperm-oocyte interaction during fertilization. This Rattus norvegicus (Rat) protein is Zona pellucida-binding protein 2 (Zpbp2).